The chain runs to 72 residues: NADH dehydrogenase [ubiquinone] 1 beta subcomplex subunit 3-A (72 aa).

The chain crosses the membrane as a helical span at residues 31 to 48; it reads ALPGIGIGVGAFCVYLVG.

This sequence belongs to the complex I NDUFB3 subunit family. As to quaternary structure, complex I is composed of at least 49 different subunits.

It is found in the mitochondrion inner membrane. Accessory subunit of the mitochondrial membrane respiratory chain NADH dehydrogenase (Complex I), that is believed not to be involved in catalysis. Complex I functions in the transfer of electrons from NADH to the respiratory chain. The immediate electron acceptor for the enzyme is believed to be ubiquinone. This chain is NADH dehydrogenase [ubiquinone] 1 beta subcomplex subunit 3-A, found in Arabidopsis thaliana (Mouse-ear cress).